Consider the following 115-residue polypeptide: Ribonuclease P protein component (115 aa).

Belongs to the RnpA family. As to quaternary structure, consists of a catalytic RNA component (M1 or rnpB) and a protein subunit.

It catalyses the reaction Endonucleolytic cleavage of RNA, removing 5'-extranucleotides from tRNA precursor.. In terms of biological role, RNaseP catalyzes the removal of the 5'-leader sequence from pre-tRNA to produce the mature 5'-terminus. It can also cleave other RNA substrates such as 4.5S RNA. The protein component plays an auxiliary but essential role in vivo by binding to the 5'-leader sequence and broadening the substrate specificity of the ribozyme. The chain is Ribonuclease P protein component from Staphylococcus aureus (strain Mu3 / ATCC 700698).